Consider the following 129-residue polypeptide: Glycine cleavage system H protein (129 aa).

The region spanning 24–106 (TYTVGITEHA…YGQGWIFKIK (83 aa)) is the Lipoyl-binding domain. At lysine 65 the chain carries N6-lipoyllysine.

This sequence belongs to the GcvH family. In terms of assembly, the glycine cleavage system is composed of four proteins: P, T, L and H. It depends on (R)-lipoate as a cofactor.

The glycine cleavage system catalyzes the degradation of glycine. The H protein shuttles the methylamine group of glycine from the P protein to the T protein. This is Glycine cleavage system H protein from Cronobacter sakazakii (strain ATCC BAA-894) (Enterobacter sakazakii).